A 320-amino-acid polypeptide reads, in one-letter code: Pyrroline-5-carboxylate reductase 2 (320 aa).

N-acetylserine is present on serine 2. NADP(+) is bound by residues 6–11 and serine 34; that span reads IGAGQL. 9 residues coordinate NADPH: alanine 8, glutamine 10, leucine 11, serine 34, glutamate 36, asparagine 56, valine 70, lysine 71, and alanine 97. NADP(+) is bound by residues asparagine 56, 69–72, and 95–97; these read AVKP and CAA. Glutamate 164 serves as a coordination point for L-proline. Asparagine 230 lines the NADPH pocket. Alanine 237 and threonine 238 together coordinate L-proline. The interval 298-320 is disordered; it reads TTLTPTSSGKLLTRSPVPGGKKD. At serine 304 the chain carries Phosphoserine.

The protein belongs to the pyrroline-5-carboxylate reductase family. As to quaternary structure, homodecamer; composed of 5 homodimers. Interacts with LTO1.

The protein resides in the cytoplasm. It is found in the mitochondrion. It carries out the reaction L-proline + NADP(+) = (S)-1-pyrroline-5-carboxylate + NADPH + 2 H(+). The enzyme catalyses L-proline + NAD(+) = (S)-1-pyrroline-5-carboxylate + NADH + 2 H(+). The protein operates within amino-acid biosynthesis; L-proline biosynthesis; L-proline from L-glutamate 5-semialdehyde: step 1/1. Its function is as follows. Oxidoreductase that catalyzes the last step in proline biosynthesis, which corresponds to the reduction of pyrroline-5-carboxylate to L-proline using NAD(P)H. At physiologic concentrations, has higher specific activity in the presence of NADH. Involved in cellular response to oxidative stress. In some cell types, such as erythrocytes, its primary function may be the generation of NADP(+). This is Pyrroline-5-carboxylate reductase 2 (PYCR2) from Bos taurus (Bovine).